The sequence spans 273 residues: Undecaprenyl-diphosphatase (273 aa).

Helical transmembrane passes span 54-74, 90-110, 116-136, 156-178, 190-210, 222-242, and 252-272; these read LGSI…LIGI, LTLI…LVFH, LFNP…LIAA, QAFM…SGAT, YAAS…ATVL, ADIP…LIAI, and ISFI…YVVF.

This sequence belongs to the UppP family.

It localises to the cell inner membrane. It carries out the reaction di-trans,octa-cis-undecaprenyl diphosphate + H2O = di-trans,octa-cis-undecaprenyl phosphate + phosphate + H(+). In terms of biological role, catalyzes the dephosphorylation of undecaprenyl diphosphate (UPP). Confers resistance to bacitracin. This chain is Undecaprenyl-diphosphatase, found in Salmonella paratyphi A (strain ATCC 9150 / SARB42).